The following is a 309-amino-acid chain: General transcription factor IIH subunit 3 (309 aa).

A C4-type zinc finger spans residues Cys269–Cys286.

The protein belongs to the TFB4 family. Part of a TFIID-containing RNA polymerase II pre-initiation complex that is composed of TBP and at least GTF2A1, GTF2A2, GTF2E1, GTF2E2, GTF2F1, GTF2H2, GTF2H3, GTF2H4, GTF2H5, GTF2B, TCEA1, ERCC2, ERCC3, TAF1, TAF2, TAF3, TAF4, TAF5, TAF6, TAF7, TAF8, TAF9, TAF10, TAF11, TAF12 and TAF13. Component of the 7-subunit TFIIH core complex composed of XPB/ERCC3, XPD/ERCC2, GTF2H1, GTF2H2, GTF2H3, GTF2H4 and GTF2H5, which is active in NER. The core complex associates with the 3-subunit CDK-activating kinase (CAK) module composed of CCNH/cyclin H, CDK7 and MNAT1 to form the 10-subunit holoenzyme (holo-TFIIH) active in transcription. Interacts with RARA; the interaction requires prior phosphorylation of RARA on 'Ser-369' which then enhances interaction of RARA with CDK7.

It is found in the nucleus. Its function is as follows. Component of the general transcription and DNA repair factor IIH (TFIIH) core complex, which is involved in general and transcription-coupled nucleotide excision repair (NER) of damaged DNA and, when complexed to CAK, in RNA transcription by RNA polymerase II. In NER, TFIIH acts by opening DNA around the lesion to allow the excision of the damaged oligonucleotide and its replacement by a new DNA fragment. In transcription, TFIIH has an essential role in transcription initiation. When the pre-initiation complex (PIC) has been established, TFIIH is required for promoter opening and promoter escape. Phosphorylation of the C-terminal tail (CTD) of the largest subunit of RNA polymerase II by the kinase module CAK controls the initiation of transcription. The protein is General transcription factor IIH subunit 3 (Gtf2h3) of Rattus norvegicus (Rat).